The primary structure comprises 344 residues: Holliday junction branch migration complex subunit RuvB (344 aa).

Residues 1 to 182 (MRIELLNTPV…FGISNRFDYY (182 aa)) are large ATPase domain (RuvB-L). Residues isoleucine 21, arginine 22, glycine 63, lysine 66, threonine 67, threonine 68, 129–131 (EDF), arginine 172, tyrosine 182, and arginine 219 each bind ATP. A Mg(2+)-binding site is contributed by threonine 67. Residues 183–253 (PPELLETILM…TAMKTLDSLE (71 aa)) are small ATPAse domain (RuvB-S). The segment at 256–344 (EEGLDEMDKK…GTLFDGQEHV (89 aa)) is head domain (RuvB-H). DNA contacts are provided by arginine 311 and arginine 316.

This sequence belongs to the RuvB family. Homohexamer. Forms an RuvA(8)-RuvB(12)-Holliday junction (HJ) complex. HJ DNA is sandwiched between 2 RuvA tetramers; dsDNA enters through RuvA and exits via RuvB. An RuvB hexamer assembles on each DNA strand where it exits the tetramer. Each RuvB hexamer is contacted by two RuvA subunits (via domain III) on 2 adjacent RuvB subunits; this complex drives branch migration. In the full resolvosome a probable DNA-RuvA(4)-RuvB(12)-RuvC(2) complex forms which resolves the HJ.

It localises to the cytoplasm. The enzyme catalyses ATP + H2O = ADP + phosphate + H(+). Functionally, the RuvA-RuvB-RuvC complex processes Holliday junction (HJ) DNA during genetic recombination and DNA repair, while the RuvA-RuvB complex plays an important role in the rescue of blocked DNA replication forks via replication fork reversal (RFR). RuvA specifically binds to HJ cruciform DNA, conferring on it an open structure. The RuvB hexamer acts as an ATP-dependent pump, pulling dsDNA into and through the RuvAB complex. RuvB forms 2 homohexamers on either side of HJ DNA bound by 1 or 2 RuvA tetramers; 4 subunits per hexamer contact DNA at a time. Coordinated motions by a converter formed by DNA-disengaged RuvB subunits stimulates ATP hydrolysis and nucleotide exchange. Immobilization of the converter enables RuvB to convert the ATP-contained energy into a lever motion, pulling 2 nucleotides of DNA out of the RuvA tetramer per ATP hydrolyzed, thus driving DNA branch migration. The RuvB motors rotate together with the DNA substrate, which together with the progressing nucleotide cycle form the mechanistic basis for DNA recombination by continuous HJ branch migration. Branch migration allows RuvC to scan DNA until it finds its consensus sequence, where it cleaves and resolves cruciform DNA. This Chlorobium luteolum (strain DSM 273 / BCRC 81028 / 2530) (Pelodictyon luteolum) protein is Holliday junction branch migration complex subunit RuvB.